A 198-amino-acid polypeptide reads, in one-letter code: Ribonuclease HII (198 aa).

Residues 10–198 enclose the RNase H type-2 domain; sequence QLVAGVDEVG…PVKRALGLAS (189 aa). A divalent metal cation-binding residues include aspartate 16, glutamate 17, and aspartate 108.

Belongs to the RNase HII family. It depends on Mn(2+) as a cofactor. Requires Mg(2+) as cofactor.

The protein resides in the cytoplasm. The catalysed reaction is Endonucleolytic cleavage to 5'-phosphomonoester.. In terms of biological role, endonuclease that specifically degrades the RNA of RNA-DNA hybrids. This Escherichia coli O6:H1 (strain CFT073 / ATCC 700928 / UPEC) protein is Ribonuclease HII.